Reading from the N-terminus, the 339-residue chain is MRVYYDRDADVNLIKSKKVVIVGYGSQGRAHALNLKDSGAANVRVALREGSATVQKAQADGFEVMNVADAAKWADLMMMATPDELQADIYRDYIHNNLRDGAAIAFAHGLNVHFGLIEPKKTVDVVMIAPKGPGHTVRGEYQKGGGVPCLIAIHQDASGNAHDLALSYASGVGGGRSGVIETTFKEECETDLFGEQAVLCGGVVELIRTGFEVLVEAGYAPEMAYFECLNEMKLIVDLIYEGGIANMNYSISNTAEWGEYVTGPRIITAETKAEMKRVLKDIQTGKFTSDWMQEWKAGAARFKGIRRLNDAHQIEEVGGKLRAMMPWIEKNKLVDKARN.

The KARI N-terminal Rossmann domain occupies 1–182 (MRVYYDRDAD…GGGRSGVIET (182 aa)). NADP(+) contacts are provided by residues 24–27 (YGSQ), R48, S51, T53, and 83–86 (DELQ). H108 is a catalytic residue. G134 contributes to the NADP(+) binding site. One can recognise a KARI C-terminal knotted domain in the interval 183–328 (TFKEECETDL…GKLRAMMPWI (146 aa)). 4 residues coordinate Mg(2+): D191, E195, E227, and E231. S252 provides a ligand contact to substrate.

The protein belongs to the ketol-acid reductoisomerase family. Requires Mg(2+) as cofactor.

The catalysed reaction is (2R)-2,3-dihydroxy-3-methylbutanoate + NADP(+) = (2S)-2-acetolactate + NADPH + H(+). It carries out the reaction (2R,3R)-2,3-dihydroxy-3-methylpentanoate + NADP(+) = (S)-2-ethyl-2-hydroxy-3-oxobutanoate + NADPH + H(+). The protein operates within amino-acid biosynthesis; L-isoleucine biosynthesis; L-isoleucine from 2-oxobutanoate: step 2/4. Its pathway is amino-acid biosynthesis; L-valine biosynthesis; L-valine from pyruvate: step 2/4. In terms of biological role, involved in the biosynthesis of branched-chain amino acids (BCAA). Catalyzes an alkyl-migration followed by a ketol-acid reduction of (S)-2-acetolactate (S2AL) to yield (R)-2,3-dihydroxy-isovalerate. In the isomerase reaction, S2AL is rearranged via a Mg-dependent methyl migration to produce 3-hydroxy-3-methyl-2-ketobutyrate (HMKB). In the reductase reaction, this 2-ketoacid undergoes a metal-dependent reduction by NADPH to yield (R)-2,3-dihydroxy-isovalerate. The chain is Ketol-acid reductoisomerase (NADP(+)) from Brucella suis (strain ATCC 23445 / NCTC 10510).